The sequence spans 1866 residues: Nucleoporin Nup188 (1866 aa).

It belongs to the Nup188 family. As to quaternary structure, part of the nuclear pore complex (NPC).

It localises to the nucleus. The protein resides in the nuclear pore complex. Functionally, component of the nuclear pore complex (NPC), a complex required for the trafficking across the nuclear envelope. Required for proper protein transport into the nucleus. This Drosophila melanogaster (Fruit fly) protein is Nucleoporin Nup188.